The following is a 397-amino-acid chain: Elongation factor Tu-1 (397 aa).

Positions 10 to 206 (KPHVNIGTIG…AVDENIPEPE (197 aa)) constitute a tr-type G domain. Positions 19–26 (GHIDHGKT) are G1. 19–26 (GHIDHGKT) lines the GTP pocket. Residue T26 coordinates Mg(2+). The interval 62 to 66 (GITIS) is G2. The tract at residues 83 to 86 (DCPG) is G3. GTP-binding positions include 83–87 (DCPGH) and 138–141 (NKAD). The interval 138–141 (NKAD) is G4. The G5 stretch occupies residues 176–178 (SAL). T386 is modified (phosphothreonine).

It belongs to the TRAFAC class translation factor GTPase superfamily. Classic translation factor GTPase family. EF-Tu/EF-1A subfamily. In terms of assembly, monomer. In terms of processing, phosphorylated on threonine and serine.

It localises to the cytoplasm. The enzyme catalyses GTP + H2O = GDP + phosphate + H(+). Its function is as follows. GTP hydrolase that promotes the GTP-dependent binding of aminoacyl-tRNA to the A-site of ribosomes during protein biosynthesis. The polypeptide is Elongation factor Tu-1 (Streptomyces collinus).